The chain runs to 144 residues: Large ribosomal subunit protein uL16 (144 aa).

This sequence belongs to the universal ribosomal protein uL16 family. Part of the 50S ribosomal subunit.

Binds 23S rRNA and is also seen to make contacts with the A and possibly P site tRNAs. This chain is Large ribosomal subunit protein uL16, found in Oceanobacillus iheyensis (strain DSM 14371 / CIP 107618 / JCM 11309 / KCTC 3954 / HTE831).